The primary structure comprises 161 residues: Tropomyosin-2 (161 aa).

The stretch at 1-161 forms a coiled coil; that stretch reads MEKIKEKLNS…DEIANSLENL (161 aa). Over residues 32–43 the composition is skewed to basic and acidic residues; it reads LEQSNTEKENEI. The segment at 32–97 is disordered; that stretch reads LEQSNTEKEN…NQDLEQQLED (66 aa). S55 is modified (phosphoserine). Residues 62–83 show a composition bias toward polar residues; that stretch reads SQLSDTKQLAEDSNNLRSNNEN. Phosphoserine is present on residues S116 and S157.

Homodimer.

It localises to the cytoplasm. It is found in the cytoskeleton. Functionally, involved in cell morphogenesis. Binds to F-actin and stabilizes the actin filaments. The sequence is that of Tropomyosin-2 (TPM2) from Saccharomyces cerevisiae (strain ATCC 204508 / S288c) (Baker's yeast).